Reading from the N-terminus, the 592-residue chain is Probable 6-phosphofructo-2-kinase C222.13c (592 aa).

Positions 1–80 (MSNTGSARTE…PANDVEKMEV (80 aa)) are disordered. Basic and acidic residues predominate over residues 57–66 (SIFKREELTP). Position 150–157 (150–157 (GIPATGKS)) interacts with ATP. Residues Asp235 and Cys266 contribute to the active site. Arg300 is a binding site for beta-D-fructose 6-phosphate. His527 acts as the Proton donor in catalysis.

The protein resides in the cytoplasm. Its subcellular location is the nucleus. It catalyses the reaction beta-D-fructose 6-phosphate + ATP = beta-D-fructose 2,6-bisphosphate + ADP + H(+). Functionally, synthesis of fructose 2,6-bisphosphate. The protein is Probable 6-phosphofructo-2-kinase C222.13c of Schizosaccharomyces pombe (strain 972 / ATCC 24843) (Fission yeast).